The chain runs to 305 residues: MSRPRKRGRDIHGVFLLDKPQGMSSNDILQKVKRIYQANKAGHTGALDPLATGMLPICLGEATKFSQFLLDADKRYQVIAKLGERTDTSDAEGQVVETRSVNVTEQKILDSLPHFRGDIMQVPTMFSALKHKGKPLYEYARAGIVVEREARPISIFELNFISYEAPYLTLEVHCSKGTYIRTLVDDLGEYLGCGAHVSMLRRTAVSDYPADKMLTWEQLQQFAQDEDLAALDARLLPVDSAVSKLPVLSLSEEQTKAVGFGQRVKFDNLQQLQGQVRLFSPQNVFLGVAEIGKDNVIRPSRMVNL.

The active-site Nucleophile is the aspartate 48.

Belongs to the pseudouridine synthase TruB family. Type 1 subfamily.

The catalysed reaction is uridine(55) in tRNA = pseudouridine(55) in tRNA. In terms of biological role, responsible for synthesis of pseudouridine from uracil-55 in the psi GC loop of transfer RNAs. This chain is tRNA pseudouridine synthase B, found in Mannheimia succiniciproducens (strain KCTC 0769BP / MBEL55E).